The chain runs to 151 residues: Cytochrome c-type biogenesis protein CcmE 1 (151 aa).

Residues 1-8 are Cytoplasmic-facing; it reads MNPLRKKR. A helical; Signal-anchor for type II membrane protein membrane pass occupies residues 9-29; that stretch reads LIIILAILVGVGAAVGLALSA. Residues 30–151 lie on the Periplasmic side of the membrane; it reads LQQNINLFYT…QSAPTPAKEG (122 aa). Residues His124 and Tyr128 each coordinate heme. The tract at residues 131–151 is disordered; that stretch reads PEVTKALKDSGQSAPTPAKEG.

This sequence belongs to the CcmE/CycJ family.

The protein resides in the cell inner membrane. Its function is as follows. Heme chaperone required for the biogenesis of c-type cytochromes. Transiently binds heme delivered by CcmC and transfers the heme to apo-cytochromes in a process facilitated by CcmF and CcmH. The sequence is that of Cytochrome c-type biogenesis protein CcmE 1 from Pseudomonas fluorescens (strain Pf0-1).